Here is a 331-residue protein sequence, read N- to C-terminus: Probable protein phosphatase 2C 1 (331 aa).

The interval 1 to 29 (MAASSTATRLSPPRLHAPTTPSPHLPLRR) is disordered. One can recognise a PPM-type phosphatase domain in the interval 48–292 (THLIPHPRKA…DDITVIVAQV (245 aa)). Mn(2+) contacts are provided by Asp-79, Gly-80, Asp-210, and Asp-283. Positions 300 to 331 (DEGVDEEKGQGDEQGSAVAVASSEQKEDSITT) are disordered.

The protein belongs to the PP2C family. Mg(2+) is required as a cofactor. Requires Mn(2+) as cofactor.

It carries out the reaction O-phospho-L-seryl-[protein] + H2O = L-seryl-[protein] + phosphate. It catalyses the reaction O-phospho-L-threonyl-[protein] + H2O = L-threonyl-[protein] + phosphate. This is Probable protein phosphatase 2C 1 from Oryza sativa subsp. japonica (Rice).